We begin with the raw amino-acid sequence, 1891 residues long: TATA-binding protein-associated factor mot1 (1891 aa).

The stretch at 30 to 68 is one HEAT 1 repeat; sequence PDELFNLLGRILPYLRSKSWDTRAAAAKAIGLIVANADT. 3 disordered regions span residues 184-216, 241-283, and 295-316; these read FVASREHSIQGTSQPLASPIEPANGEESGLSKR, LSSR…LDRS, and FKGASVPENPLLQPESTEEGPN. Residues 264–275 show a composition bias toward basic and acidic residues; the sequence is ENGEERNGDSKP. 2 HEAT repeats span residues 473–511 and 569–606; these read SKLMDGVLEAVMKGLGDYDDDVRAVSAATLVPIAEEFVK and SSFGKLVPRLYPFLRHTITSVRSAVLRALMTFLQLEGE. The segment covering 699–710 has biased composition (low complexity); it reads SAAAPARSSPAS. The disordered stretch occupies residues 699-740; it reads SAAAPARSSPASNTPEGTKGRRRKSEKKEAPPPSAHNVDGHM. HEAT repeat units lie at residues 957 to 996, 1139 to 1177, 1181 to 1216, and 1219 to 1257; these read PKKPSHIIKGMMDSIKKEENAELQQRSATAITSLVEYYTT, YPWVVDLLPLVVKALQCKLSVIRYAAAKCFATICSVITV, TMLVEKVLPMINDALDVHHRQGAVECIYHLIHVMED, and LPYVIFLVVPVLGRMSDSDNEVRLLATTSFATLVKLVPL. Residues 1316-1489 enclose the Helicase ATP-binding domain; the sequence is AFLNRYNLHG…WSLFDFLMPG (174 aa). 1329 to 1336 provides a ligand contact to ATP; that stretch reads DDMGLGKT. Residues 1440 to 1443 carry the DEAH box motif; that stretch reads DEGH. An HEAT 8 repeat occupies 1526-1565; the sequence is EALHKQVLPFLLRRLKEEVLNDLPPKIIQNYYCDPSELQR. Positions 1663-1813 constitute a Helicase C-terminal domain; the sequence is DLSGASYVSP…STVVNQQNAG (151 aa).

It belongs to the SNF2/RAD54 helicase family. Forms the NCT transcriptional regulatory complex with nctA and nctB.

The protein localises to the nucleus. Regulates transcription in association with TATA binding protein (TBP). Removes TBP from the TATA box via its C-terminal ATPase activity. Both transcription activation and repression require its ATPase activity. Part of the NCT transcriptional regulatory complex that acts as a key regulator of ergosterol biosynthesis and the azole exporter cdr1B. The NCT complex binds the promoters of genes linked to azole susceptibility, and especially represses the expression of cdr1B transporter. This chain is TATA-binding protein-associated factor mot1, found in Aspergillus fumigatus (strain CBS 144.89 / FGSC A1163 / CEA10) (Neosartorya fumigata).